Consider the following 349-residue polypeptide: MNRYKDAGVDVEAGYDLVKRIKKDIAATSRPETSGTIGSFGGMFDLEKLGYQHPVLVSGTDGVGTKLMIAQEMGINDTIGIDCVAMCVNDVLAQGAEPLFFLDYIATGHNDPAKLAQVVHGVAEGCRQSGSALIGGETAEMPDMYPKNEYDLAGFSTGIANKEDILTQDLAKEGDILIGLPSSGVHSNGFSLIRQVLFKDHHLKVTDRPEALEGKSIGEILLTPTKIYVQAVLSLVKRHLLHGIAHITGGGLIENLPRTYNDDLQAEVNLGAWPVQAIFRYLQNKGQLKEQDCLNTFNMGIGLVLLVPKANVLQVKEQLKQKNEQYYEIGKLRKRPIGEKKIVFNGSFK.

It belongs to the AIR synthase family.

The protein localises to the cytoplasm. It catalyses the reaction 2-formamido-N(1)-(5-O-phospho-beta-D-ribosyl)acetamidine + ATP = 5-amino-1-(5-phospho-beta-D-ribosyl)imidazole + ADP + phosphate + H(+). It functions in the pathway purine metabolism; IMP biosynthesis via de novo pathway; 5-amino-1-(5-phospho-D-ribosyl)imidazole from N(2)-formyl-N(1)-(5-phospho-D-ribosyl)glycinamide: step 2/2. The chain is Phosphoribosylformylglycinamidine cyclo-ligase from Lactobacillus helveticus (strain DPC 4571).